A 630-amino-acid polypeptide reads, in one-letter code: Plastin-3 (630 aa).

EF-hand domains lie at 12 to 47 and 52 to 87; these read DELDELKEAFAKVDLNSNGFICDYELHELFKEANMP and KVREIIQKLMLDGDRNKDGKISFDEFVYIFQEVKSS. Residues aspartate 25, asparagine 27, asparagine 29, glutamate 36, aspartate 65, asparagine 67, aspartate 69, lysine 71, and glutamate 76 each contribute to the Ca(2+) site. Actin-binding stretches follow at residues 109–382 and 383–627; these read TSEL…ALTK and PENQ…GRGM. 2 consecutive Calponin-homology (CH) domains span residues 123–239 and 267–378; these read EEEK…KIGL and LSPE…NKYP. Phosphoserine occurs at positions 268, 293, 326, and 339. Residue threonine 391 is modified to Phosphothreonine. 2 Calponin-homology (CH) domains span residues 397-506 and 518-627; these read TREE…RRYT and KAND…GRGM.

Monomer.

Its subcellular location is the cytoplasm. Functionally, actin-bundling protein. The polypeptide is Plastin-3 (PLS3) (Bos taurus (Bovine)).